The primary structure comprises 349 residues: Insulin gene enhancer protein isl-1 (349 aa).

LIM zinc-binding domains are found at residues Cys-17 to Asp-70 and Cys-79 to His-133. Positions Thr-181–Ser-240 form a DNA-binding region, homeobox. The segment at Val-312–Ala-349 is disordered. Residues Ser-321–Val-343 show a composition bias toward polar residues.

It is found in the nucleus. Functionally, DNA-binding transcriptional activator. Recognizes and binds to the consensus octamer binding site 5'-ATAATTAA-3' in promoter of target genes. Plays a fundamental role in the gene regulatory network essential for retinal ganglion cell (RGC) differentiation. May be involved in subtype specialization of primary motoneurons. May bind to insulin gene enhancer sequences. Essential for heart development. The protein is Insulin gene enhancer protein isl-1 (isl1) of Danio rerio (Zebrafish).